The sequence spans 543 residues: Membrane protein insertase YidC (543 aa).

A helical membrane pass occupies residues 7 to 27; the sequence is FLLIGLAMVSFLLWQQWQVDY. Positions 30 to 61 are disordered; that stretch reads QPAQPVESQQTTGSDAPNSNGDVPIATPTNKS. Polar residues predominate over residues 35-61; it reads VESQQTTGSDAPNSNGDVPIATPTNKS. The next 4 helical transmembrane spans lie at 341-361, 421-441, 451-471, and 499-519; these read FAFL…IILI, GGCF…WVLL, FIFW…PILT, and PVAM…YWLI.

This sequence belongs to the OXA1/ALB3/YidC family. Type 1 subfamily. As to quaternary structure, interacts with the Sec translocase complex via SecD. Specifically interacts with transmembrane segments of nascent integral membrane proteins during membrane integration.

The protein resides in the cell inner membrane. In terms of biological role, required for the insertion and/or proper folding and/or complex formation of integral membrane proteins into the membrane. Involved in integration of membrane proteins that insert both dependently and independently of the Sec translocase complex, as well as at least some lipoproteins. Aids folding of multispanning membrane proteins. This is Membrane protein insertase YidC from Pseudoalteromonas atlantica (strain T6c / ATCC BAA-1087).